Consider the following 24-residue polypeptide: Brevinin-1Lb (24 aa).

A disulfide bond links Cys18 and Cys24.

As to expression, expressed by the skin glands.

It localises to the secreted. Its function is as follows. Antibacterial activity against Gram-positive bacterium S.aureus and Gram-negative bacterium E.coli. The protein is Brevinin-1Lb of Rana luteiventris (Columbia spotted frog).